A 451-amino-acid chain; its full sequence is Cobyrinate a,c-diamide synthase (451 aa).

Positions 246 to 437 constitute a GATase cobBQ-type domain; the sequence is KIGVAYDEVF…VHTHVAAMPN (192 aa). The Nucleophile role is filled by Cys-328.

Belongs to the CobB/CbiA family. Mg(2+) serves as cofactor.

The catalysed reaction is cob(II)yrinate + 2 L-glutamine + 2 ATP + 2 H2O = cob(II)yrinate a,c diamide + 2 L-glutamate + 2 ADP + 2 phosphate + 2 H(+). It catalyses the reaction Ni-sirohydrochlorin + 2 L-glutamine + 2 ATP + 2 H2O = Ni-sirohydrochlorin a,c-diamide + 2 L-glutamate + 2 ADP + 2 phosphate + 2 H(+). It participates in cofactor biosynthesis; adenosylcobalamin biosynthesis; cob(II)yrinate a,c-diamide from sirohydrochlorin (anaerobic route): step 10/10. Its function is as follows. Catalyzes the ATP-dependent amidation of the two carboxylate groups at positions a and c of cobyrinate, using either L-glutamine or ammonia as the nitrogen source. Involved in the biosynthesis of the unique nickel-containing tetrapyrrole coenzyme F430, the prosthetic group of methyl-coenzyme M reductase (MCR), which plays a key role in methanogenesis and anaerobic methane oxidation. Catalyzes the ATP-dependent amidation of the two carboxylate groups at positions a and c of Ni-sirohydrochlorin, using L-glutamine or ammonia as the nitrogen source. This is Cobyrinate a,c-diamide synthase from Methanobrevibacter smithii (strain ATCC 35061 / DSM 861 / OCM 144 / PS).